The following is a 562-amino-acid chain: NAD-dependent malic enzyme (562 aa).

Tyr101 (proton donor) is an active-site residue. An NAD(+)-binding site is contributed by Arg154. The active-site Proton acceptor is the Lys172. A divalent metal cation-binding residues include Glu243, Asp244, and Asp267. Asp267 and Asn415 together coordinate NAD(+).

The protein belongs to the malic enzymes family. As to quaternary structure, homotetramer. The cofactor is Mg(2+). It depends on Mn(2+) as a cofactor.

The enzyme catalyses (S)-malate + NAD(+) = pyruvate + CO2 + NADH. It catalyses the reaction oxaloacetate + H(+) = pyruvate + CO2. In Shewanella denitrificans (strain OS217 / ATCC BAA-1090 / DSM 15013), this protein is NAD-dependent malic enzyme.